Here is a 223-residue protein sequence, read N- to C-terminus: Phosphoribosylformylglycinamidine synthase subunit PurQ (223 aa).

The Glutamine amidotransferase type-1 domain maps to Lys-4–Ala-223. Cys-87 serves as the catalytic Nucleophile. Active-site residues include His-195 and Glu-197.

In terms of assembly, part of the FGAM synthase complex composed of 1 PurL, 1 PurQ and 2 PurS subunits.

Its subcellular location is the cytoplasm. The catalysed reaction is N(2)-formyl-N(1)-(5-phospho-beta-D-ribosyl)glycinamide + L-glutamine + ATP + H2O = 2-formamido-N(1)-(5-O-phospho-beta-D-ribosyl)acetamidine + L-glutamate + ADP + phosphate + H(+). It catalyses the reaction L-glutamine + H2O = L-glutamate + NH4(+). Its pathway is purine metabolism; IMP biosynthesis via de novo pathway; 5-amino-1-(5-phospho-D-ribosyl)imidazole from N(2)-formyl-N(1)-(5-phospho-D-ribosyl)glycinamide: step 1/2. Part of the phosphoribosylformylglycinamidine synthase complex involved in the purines biosynthetic pathway. Catalyzes the ATP-dependent conversion of formylglycinamide ribonucleotide (FGAR) and glutamine to yield formylglycinamidine ribonucleotide (FGAM) and glutamate. The FGAM synthase complex is composed of three subunits. PurQ produces an ammonia molecule by converting glutamine to glutamate. PurL transfers the ammonia molecule to FGAR to form FGAM in an ATP-dependent manner. PurS interacts with PurQ and PurL and is thought to assist in the transfer of the ammonia molecule from PurQ to PurL. This chain is Phosphoribosylformylglycinamidine synthase subunit PurQ, found in Corynebacterium glutamicum (strain ATCC 13032 / DSM 20300 / JCM 1318 / BCRC 11384 / CCUG 27702 / LMG 3730 / NBRC 12168 / NCIMB 10025 / NRRL B-2784 / 534).